A 147-amino-acid polypeptide reads, in one-letter code: Hemoglobin subunit gamma (147 aa).

Positions 3 to 147 (HFTAEEKAAI…VATALAHKYH (145 aa)) constitute a Globin domain. Histidine 64 and histidine 93 together coordinate heme b.

The protein belongs to the globin family. Heterotetramer of two alpha chains and two gamma chains. In terms of tissue distribution, red blood cells.

Functionally, this protein functions as an embryonic globin, but the gene structure and chromosomal location resemble more closely the human gamma chain gene, which codes for a fetal globin. The polypeptide is Hemoglobin subunit gamma (HBG) (Oryctolagus cuniculus (Rabbit)).